The primary structure comprises 260 residues: Trialysin (260 aa).

Positions 1-19 are cleaved as a signal peptide; sequence MSKFWLLLLLVAAFQFAHS. Residues 20 to 55 constitute a propeptide, removed in mature form, probably by the serine protease triapsin; it reads YPAAEYELDETTNDEVRQFIGDGYFEDEGDDGDEER.

This sequence belongs to the redulysin-like family. In terms of tissue distribution, expressed in salivary glands.

Its subcellular location is the secreted. It localises to the target cell membrane. Its function is as follows. Pore-forming protein that induces lysis of T.cruzi trypomastigotes, bacteria E.coli and human red blood cells. The parasite lysis is much more important than the hemolysis, probably due to difference in membrane composition. Its action on protozoan parasites and bacteria may indicate a role in the control of microorganism growth in the salivary glands. The chain is Trialysin from Triatoma infestans (Assassin bug).